We begin with the raw amino-acid sequence, 147 residues long: Diuretic hormone 45 (147 aa).

A signal peptide spans 1 to 26 (MMWWAVWCAAMVAGSVFTAAAPPTDS). Positions 27–84 (IDLMQMDPSLADDESLGFAMQSLSGRYAAAPWLYLLADVSHDPQRMAEFSQSSGRARP) are excised as a propeptide. Val-131 bears the Valine amide mark. Positions 135–147 (GAWGEPASYLYNN) are excised as a propeptide.

This sequence belongs to the sauvagine/corticotropin-releasing factor/urotensin I family.

The protein resides in the secreted. Regulation of fluid secretion. The chain is Diuretic hormone 45 (dh45) from Bombyx mori (Silk moth).